The primary structure comprises 359 residues: 3-dehydroquinate synthase (359 aa).

NAD(+)-binding positions include 72 to 77 (DGEHYK), 106 to 110 (GVIGD), 130 to 131 (TT), Lys-143, and Lys-152. Residues Glu-185, His-248, and His-265 each contribute to the Zn(2+) site.

Belongs to the sugar phosphate cyclases superfamily. Dehydroquinate synthase family. It depends on Co(2+) as a cofactor. Zn(2+) is required as a cofactor. The cofactor is NAD(+).

The protein resides in the cytoplasm. The enzyme catalyses 7-phospho-2-dehydro-3-deoxy-D-arabino-heptonate = 3-dehydroquinate + phosphate. Its pathway is metabolic intermediate biosynthesis; chorismate biosynthesis; chorismate from D-erythrose 4-phosphate and phosphoenolpyruvate: step 2/7. Catalyzes the conversion of 3-deoxy-D-arabino-heptulosonate 7-phosphate (DAHP) to dehydroquinate (DHQ). This Thermodesulfovibrio yellowstonii (strain ATCC 51303 / DSM 11347 / YP87) protein is 3-dehydroquinate synthase.